The chain runs to 118 residues: MARVTVEDCVDKVPNRFDLVMLAAHRAREIAAGSPLTVDRDNDKNPVVSLREIADETQPVDDLRERMIEAQQTQIEVDEPEEDAMALLLGAEMDRPKPADEESEERMLRMMLEAQGRN.

This sequence belongs to the RNA polymerase subunit omega family. As to quaternary structure, the RNAP catalytic core consists of 2 alpha, 1 beta, 1 beta' and 1 omega subunit. When a sigma factor is associated with the core the holoenzyme is formed, which can initiate transcription.

It catalyses the reaction RNA(n) + a ribonucleoside 5'-triphosphate = RNA(n+1) + diphosphate. Its function is as follows. Promotes RNA polymerase assembly. Latches the N- and C-terminal regions of the beta' subunit thereby facilitating its interaction with the beta and alpha subunits. This chain is DNA-directed RNA polymerase subunit omega, found in Paracoccus denitrificans (strain Pd 1222).